The following is a 205-amino-acid chain: MAQLYFYYSAMNAGKTTALLQSSYNYQERGMRTVLYTADMNSRDNRYKQIKSRIGLYASARVFNIKTNFFDQVVTIHQKDIIHCVLVDECHFLNRNQVIDLSKIVDVLNIPVLCYGLRTDFRADLFSGSLWLLAWADKLIELKTICYCGRKANRVLRIDDQGLIIRDGNQILVGGNNRYVSVCRKHFVEQLESPLSLTKRVYKNR.

Residues 9–16 and 88–91 each bind ATP; these read SAMNAGKT and DECH. The Proton acceptor role is filled by E89. Zn(2+)-binding residues include C146, C148, C183, and H186.

This sequence belongs to the thymidine kinase family. As to quaternary structure, homotetramer.

It localises to the cytoplasm. The catalysed reaction is thymidine + ATP = dTMP + ADP + H(+). This chain is Thymidine kinase, found in Blochmanniella pennsylvanica (strain BPEN).